Consider the following 232-residue polypeptide: Ribonuclease 3 (232 aa).

Positions 5–134 (QTVLKNHFAI…FLGALLLDKD (130 aa)) constitute an RNase III domain. Glu47 is a binding site for Mg(2+). The active site involves Asp51. 2 residues coordinate Mg(2+): Asp120 and Glu123. Glu123 is a catalytic residue. The 70-residue stretch at 160-229 (DYKTHLQELL…AKNAVEKGLD (70 aa)) folds into the DRBM domain.

Belongs to the ribonuclease III family. Homodimer. It depends on Mg(2+) as a cofactor.

The protein resides in the cytoplasm. The enzyme catalyses Endonucleolytic cleavage to 5'-phosphomonoester.. Digests double-stranded RNA. Involved in the processing of primary rRNA transcript to yield the immediate precursors to the large and small rRNAs (23S and 16S). Processes some mRNAs, and tRNAs when they are encoded in the rRNA operon. Processes pre-crRNA and tracrRNA of type II CRISPR loci if present in the organism. The polypeptide is Ribonuclease 3 (Streptococcus pneumoniae serotype 4 (strain ATCC BAA-334 / TIGR4)).